The primary structure comprises 163 residues: Succinate dehydrogenase assembly factor 2-A, mitochondrial (163 aa).

The transit peptide at 1-23 directs the protein to the mitochondrion; sequence MLRQLRLTMDISGWIFLPWRRSM.

This sequence belongs to the SDHAF2 family. As to quaternary structure, interacts with the flavoprotein subunit within the SDH catalytic dimer.

The protein resides in the mitochondrion matrix. Plays an essential role in the assembly of succinate dehydrogenase (SDH), an enzyme complex (also referred to as respiratory complex II) that is a component of both the tricarboxylic acid (TCA) cycle and the mitochondrial electron transport chain, and which couples the oxidation of succinate to fumarate with the reduction of ubiquinone (coenzyme Q) to ubiquinol. Required for flavinylation (covalent attachment of FAD) of the flavoprotein subunit of the SDH catalytic dimer. This is Succinate dehydrogenase assembly factor 2-A, mitochondrial from Drosophila sechellia (Fruit fly).